The sequence spans 317 residues: MPREDRATWKSNYFLKIIQLLDDYPKCFIVGADNVGSKQMQQIRMSLRGKVVVLMGKNTMMRKAIRGHLENNPALEKLLPHIWGNVGFVFTKEDLTEIRDMLLANKVPAAARAGAIAPCEVTVPAQNTGLGPEKTSFFQALGITTKISRGTIEILSDVQLIKTGDKVGASEATLLNMLNISPFSFGLVIQQVFDNGSIYNPEVLDKTEETLHSRFLEGVRNVASVCLQTGYPTVASVPHSIINGYKRVLALSVETDYTFPLAENVKAFLADPSAFVAAAPVAADTTAAPAAAAAPAKVEAKEESEESDEDMGFGLFD.

Tyr-24 is modified (phosphotyrosine). The residue at position 59 (Thr-59) is a Phosphothreonine. The segment at 292–317 (AAAPAKVEAKEESEESDEDMGFGLFD) is disordered. A Glycyl lysine isopeptide (Lys-Gly) (interchain with G-Cter in SUMO1); alternate cross-link involves residue Lys-297. Lys-297 participates in a covalent cross-link: Glycyl lysine isopeptide (Lys-Gly) (interchain with G-Cter in SUMO2); alternate. A compositionally biased stretch (acidic residues) spans 302 to 311 (EESEESDEDM). Phosphoserine is present on residues Ser-304 and Ser-307.

It belongs to the universal ribosomal protein uL10 family. P0 forms a pentameric complex by interaction with dimers of P1 and P2.

In terms of biological role, ribosomal protein P0 is the functional equivalent of E.coli protein L10. The protein is Putative ribosomal protein uL10-like (RPLP0P6) of Homo sapiens (Human).